The sequence spans 291 residues: RPE-retinal G protein-coupled receptor (291 aa).

Topologically, residues 1 to 15 are extracellular; the sequence is MAETSALPTGFGELE. Residues 16-36 traverse the membrane as a helical segment; sequence VLAVGMVLLVEALSGLSLNTL. Over 37–52 the chain is Cytoplasmic; the sequence is TIFSFCKTPELRTPCH. Residues 53 to 73 form a helical membrane-spanning segment; that stretch reads LLVLSLALADSGISLNALVAA. Residues 74-91 lie on the Extracellular side of the membrane; that stretch reads TSSLLRRWPYGSDGCQAH. An intrachain disulfide couples Cys88 to Cys162. Residues 92-112 form a helical membrane-spanning segment; that stretch reads GFQGFVTALASICSSAAIAWG. The Cytoplasmic portion of the chain corresponds to 113–130; it reads RYHHYCTRSQLAWNSAVS. The chain crosses the membrane as a helical span at residues 131 to 151; sequence LVLFVWLSSAFWAALPLLGWG. The Extracellular segment spans residues 152 to 175; that stretch reads HYDYEPLGTCCTLDYSKGDRNFTS. Asn172 is a glycosylation site (N-linked (GlcNAc...) asparagine). The chain crosses the membrane as a helical span at residues 176-196; the sequence is FLFTMSFFNFAMPLFITITSY. Residues 197 to 219 lie on the Cytoplasmic side of the membrane; it reads SLMEQKLGKSGHLQVNTTLPART. A helical transmembrane segment spans residues 220-240; it reads LLLGWGPYAILYLYAVIADVT. At 241 to 247 the chain is on the extracellular side; sequence SISPKLQ. A helical transmembrane segment spans residues 248 to 268; that stretch reads MVPALIAKMVPTINAINYALG. Residue Lys255 is modified to N6-(retinylidene)lysine. Over 269-291 the chain is Cytoplasmic; the sequence is NEMVCRGIWQCLSPQKREKDRTK.

The protein belongs to the G-protein coupled receptor 1 family. Opsin subfamily. In terms of processing, covalently binds all-trans- and 11-cis-retinal. In terms of tissue distribution, preferentially expressed at high levels in the retinal pigment epithelium (RPE) and Mueller cells of the neural retina.

The protein localises to the membrane. Its function is as follows. Receptor for all-trans- and 11-cis-retinal. Binds preferentially to the former and may catalyze the isomerization of the chromophore by a retinochrome-like mechanism. This chain is RPE-retinal G protein-coupled receptor (RGR), found in Homo sapiens (Human).